The primary structure comprises 780 residues: MASAEATPQQQIDQLKVNAGWDMKSNIKAGLLHHEEMEKKATKTVTEYIEKFADVLEENVLRFLQDNAEMLELCIYMYEQLPAYKAVKSRGILSAKRFYDTYVLRTADGSCYESVSHCFMRIAAFCTVQVLTNSALKITILYLGRDKLFKDLPCSPTMDLFIYFFSPLSHQLVCCATPIMRSAGLRDANLASCFLINPDLSTEKSTTTALLQELTMLLSAKSGVGCNVTSFGVDEKCIQSCVGLINSQVEFFNDQNPRPVSVAAYMEVWHSQIQEFLAVKLPENPSRCASIYQGLCIPKLFFEKFIEDPGQNWYLFKPEKSGNLANLYGDEFRSEYERLVGIGCYADAIPIKSLMFLIINTIIKTGSPYIIYKEACNEHHWKNMEGCAIASANLCAEVIQYPGADVSTCNLANVCLPMCLVTVSNDSHSPLEKTYCGNVIESQAVSGVGFSMPILHAAVEVAVFLVNCAIAGGKCVTPGMERGQRERSMGIGVHGLADVFAEMGYSYLDERAARLDVEIFENMYFRAVKTSNNICRLGGGRPFEGWGESKLRHGFFHWQGWEDVNLSIPITEWEKLSRRCISSGVYNSQFIALMPTVGSSLLTGFSESYYPYFANISSKVSSKEEVMKPNMTFWNRVSKEDLDTVRFFSGDVALFPEPLKEKYSLFLSAFDYCAEKQLARARLRAPFVDQSQSHSFHLKEENVVSARFLKDLILSGYTLGLKTIMYYCKVKKQSTMSSFQCLRDQNKSEMTGNDQGVEPESYIKCTAAGGETSEACLHCQ.

Residues T177, 192 to 193 (SC), G223, 393 to 397 (NLCAE), and 595 to 599 (PTVGS) contribute to the substrate site. A disulfide bridge links C193 with C409. Residue N393 is the Proton acceptor of the active site. The active-site Cysteine radical intermediate is C395. E397 functions as the Proton acceptor in the catalytic mechanism.

The protein belongs to the ribonucleoside diphosphate reductase large chain family. Heterotetramer composed of a homodimer of the large subunit (R1) and a homodimer of the small subunit (R2). Larger multisubunit protein complex are also active, composed of (R1)n(R2)n.

The enzyme catalyses a 2'-deoxyribonucleoside 5'-diphosphate + [thioredoxin]-disulfide + H2O = a ribonucleoside 5'-diphosphate + [thioredoxin]-dithiol. Its function is as follows. Ribonucleoside-diphosphate reductase holoenzyme provides the precursors necessary for viral DNA synthesis. Allows virus growth in non-dividing cells, as well as reactivation from latency in infected hosts. Catalyzes the biosynthesis of deoxyribonucleotides from the corresponding ribonucleotides. The protein is Ribonucleoside-diphosphate reductase large subunit of Connochaetes taurinus (Blue wildebeest).